The chain runs to 291 residues: Shikimate dehydrogenase (NADP(+)) (291 aa).

Shikimate is bound by residues 26-28 and Ser73; that span reads SLS. The active-site Proton acceptor is Lys77. Shikimate is bound by residues Asn98 and Asp113. Residues 137–141 and Val238 each bind NADP(+); that span reads GAGGA. Tyr240 is a binding site for shikimate. Gly261 lines the NADP(+) pocket.

This sequence belongs to the shikimate dehydrogenase family. As to quaternary structure, homodimer.

It carries out the reaction shikimate + NADP(+) = 3-dehydroshikimate + NADPH + H(+). Its pathway is metabolic intermediate biosynthesis; chorismate biosynthesis; chorismate from D-erythrose 4-phosphate and phosphoenolpyruvate: step 4/7. In terms of biological role, involved in the biosynthesis of the chorismate, which leads to the biosynthesis of aromatic amino acids. Catalyzes the reversible NADPH linked reduction of 3-dehydroshikimate (DHSA) to yield shikimate (SA). This is Shikimate dehydrogenase (NADP(+)) from Listeria innocua serovar 6a (strain ATCC BAA-680 / CLIP 11262).